The chain runs to 125 residues: Large ribosomal subunit protein bL17 (125 aa).

Belongs to the bacterial ribosomal protein bL17 family. In terms of assembly, part of the 50S ribosomal subunit. Contacts protein L32.

The sequence is that of Large ribosomal subunit protein bL17 from Acinetobacter baylyi (strain ATCC 33305 / BD413 / ADP1).